The following is a 159-amino-acid chain: MTSRLARLWQPGNPQRRVFLPDFWMAVVESPSVGRNRLPRNCVKFEVDPRMSRHDIREYLTKIYDLPVRDVRTEVQMGDITWNSKLDHQYKKAMWKDEDKKIAYVFMSKGFEFSYPQMFEALEEDLELVKAMKQQEELKDKLNERYANRNRRVGQFLGA.

This sequence belongs to the universal ribosomal protein uL23 family. In terms of assembly, component of the mitochondrial ribosome large subunit (39S) which comprises a 16S rRNA and about 50 distinct proteins.

It localises to the mitochondrion. This is Large ribosomal subunit protein uL23m (mrpl-23) from Caenorhabditis elegans.